The primary structure comprises 396 residues: Probable sugar efflux transporter (396 aa).

At 1–14 the chain is on the cytoplasmic side; it reads MTTNTVSRKVAWLR. Residues 15 to 35 form a helical membrane-spanning segment; the sequence is VVTLAVAAFIFNTTEFVPVGL. The Periplasmic portion of the chain corresponds to 36-49; it reads LSDIAQSFHMQTAQ. The helical transmembrane segment at 50–70 threads the bilayer; sequence VGIMLTIYAWVVALMSLPFML. The Cytoplasmic segment spans residues 71-80; that stretch reads MTSQVERRKL. Residues 81–101 traverse the membrane as a helical segment; sequence LICLFVVFIASHVLSFLSWSF. A topological domain (periplasmic) is located at residue Thr102. A helical membrane pass occupies residues 103-123; the sequence is VLVISRIGVAFAHAIFWSITA. Over 124–135 the chain is Cytoplasmic; it reads SLAIRMAPAGKR. A helical transmembrane segment spans residues 136-156; that stretch reads AQALSLIATGTALAMVLGLPL. The Periplasmic segment spans residues 157–169; the sequence is GRIVGQYFGWRMT. Residues 170–190 form a helical membrane-spanning segment; the sequence is FFAIGIGALVTLLCLIKLLPL. The Cytoplasmic portion of the chain corresponds to 191-208; it reads LPSEHSGSLKSLPLLFRR. A helical membrane pass occupies residues 209–229; the sequence is PALMSIYLLTVVVVTAHYTAY. Over 230-245 the chain is Periplasmic; that stretch reads SYIEPFVQNIAGFSAN. A helical transmembrane segment spans residues 246–266; the sequence is FATALLLLLGGAGIIGSVIFG. Residues 267–274 lie on the Cytoplasmic side of the membrane; the sequence is KLGNQYAS. The helical transmembrane segment at 275-295 threads the bilayer; that stretch reads ALVSTAIALLLVCLALLLPAA. At 296–298 the chain is on the periplasmic side; that stretch reads NSE. A helical membrane pass occupies residues 299–319; the sequence is IHLGVLSIFWGIAMMIIGLGM. Topologically, residues 320–332 are cytoplasmic; that stretch reads QVKVLALAPDATD. Residues 333-353 form a helical membrane-spanning segment; it reads VAMALFSGIFNIGIGAGALVG. Topologically, residues 354–363 are periplasmic; it reads NQVSLHWSMS. A helical membrane pass occupies residues 364 to 384; sequence MIGYVGAVPAFAALIWSIIIF. Residues 385 to 396 are Cytoplasmic-facing; that stretch reads RRWPVTLEEQTQ.

This sequence belongs to the major facilitator superfamily. SotB (TC 2.A.1.2) family.

It localises to the cell inner membrane. Involved in the efflux of sugars. The physiological role may be the reduction of the intracellular concentration of toxic sugars or sugar metabolites. The polypeptide is Probable sugar efflux transporter (Shigella flexneri).